The chain runs to 418 residues: Gamma-glutamyl phosphate reductase (418 aa).

Belongs to the gamma-glutamyl phosphate reductase family.

It localises to the cytoplasm. It carries out the reaction L-glutamate 5-semialdehyde + phosphate + NADP(+) = L-glutamyl 5-phosphate + NADPH + H(+). It participates in amino-acid biosynthesis; L-proline biosynthesis; L-glutamate 5-semialdehyde from L-glutamate: step 2/2. In terms of biological role, catalyzes the NADPH-dependent reduction of L-glutamate 5-phosphate into L-glutamate 5-semialdehyde and phosphate. The product spontaneously undergoes cyclization to form 1-pyrroline-5-carboxylate. This is Gamma-glutamyl phosphate reductase from Geotalea daltonii (strain DSM 22248 / JCM 15807 / FRC-32) (Geobacter daltonii).